A 321-amino-acid polypeptide reads, in one-letter code: L-carnitine dehydrogenase (321 aa).

14-19 (GAGVIG) contributes to the NAD(+) binding site.

The protein belongs to the 3-hydroxyacyl-CoA dehydrogenase family. L-carnitine dehydrogenase subfamily. Homodimer.

It is found in the cytoplasm. The enzyme catalyses carnitine + NAD(+) = 3-dehydrocarnitine + NADH + H(+). The protein operates within amine and polyamine metabolism; carnitine metabolism. Its function is as follows. Catalyzes the NAD(+)-dependent oxidation of L-carnitine to 3-dehydrocarnitine. The polypeptide is L-carnitine dehydrogenase (Burkholderia mallei (strain ATCC 23344)).